Consider the following 288-residue polypeptide: ATP synthase gamma chain (288 aa).

It belongs to the ATPase gamma chain family. F-type ATPases have 2 components, CF(1) - the catalytic core - and CF(0) - the membrane proton channel. CF(1) has five subunits: alpha(3), beta(3), gamma(1), delta(1), epsilon(1). CF(0) has three main subunits: a, b and c.

The protein localises to the cell inner membrane. In terms of biological role, produces ATP from ADP in the presence of a proton gradient across the membrane. The gamma chain is believed to be important in regulating ATPase activity and the flow of protons through the CF(0) complex. This is ATP synthase gamma chain from Paracidovorax citrulli (strain AAC00-1) (Acidovorax citrulli).